A 460-amino-acid chain; its full sequence is ATP synthase subunit beta (460 aa).

150-157 (GGAGVGKT) provides a ligand contact to ATP.

Belongs to the ATPase alpha/beta chains family. As to quaternary structure, F-type ATPases have 2 components, CF(1) - the catalytic core - and CF(0) - the membrane proton channel. CF(1) has five subunits: alpha(3), beta(3), gamma(1), delta(1), epsilon(1). CF(0) has three main subunits: a(1), b(2) and c(9-12). The alpha and beta chains form an alternating ring which encloses part of the gamma chain. CF(1) is attached to CF(0) by a central stalk formed by the gamma and epsilon chains, while a peripheral stalk is formed by the delta and b chains.

Its subcellular location is the cell inner membrane. It catalyses the reaction ATP + H2O + 4 H(+)(in) = ADP + phosphate + 5 H(+)(out). Functionally, produces ATP from ADP in the presence of a proton gradient across the membrane. The catalytic sites are hosted primarily by the beta subunits. In Salmonella agona (strain SL483), this protein is ATP synthase subunit beta.